Here is a 540-residue protein sequence, read N- to C-terminus: Ubiquitin carboxyl-terminal hydrolase 17-like protein E (540 aa).

Positions 1–22 (MVVSLSFPEETGGENLPSAPLE) are disordered. The USP domain occupies 85–382 (CGLQNTGNSC…NAYVLFYVQQ (298 aa)). Cys-94 functions as the Nucleophile in the catalytic mechanism. Catalysis depends on His-341, which acts as the Proton acceptor. 2 stretches are compositionally biased toward basic and acidic residues: residues 431-441 (NREKRAKKETS) and 508-520 (APDKENQPWHNGD). Disordered stretches follow at residues 431–461 (NREKRAKKETSLGEGKVPQEVNHEKAGQKHG) and 499–540 (RSTA…QGGR). The span at 523-540 (LTSQGLMSPGQLCSQGGR) shows a compositional bias: polar residues.

Belongs to the peptidase C19 family. USP17 subfamily. Interacts with SUDS3; the interaction is direct.

The protein localises to the nucleus. The protein resides in the endoplasmic reticulum. It catalyses the reaction Thiol-dependent hydrolysis of ester, thioester, amide, peptide and isopeptide bonds formed by the C-terminal Gly of ubiquitin (a 76-residue protein attached to proteins as an intracellular targeting signal).. In terms of biological role, deubiquitinating enzyme that removes conjugated ubiquitin from specific proteins to regulate different cellular processes that may include cell proliferation, progression through the cell cycle, apoptosis, cell migration, and the cellular response to viral infection. The chain is Ubiquitin carboxyl-terminal hydrolase 17-like protein E (Usp17le) from Mus musculus (Mouse).